The primary structure comprises 275 residues: Putative carbamate hydrolase RutD (275 aa).

The 102-residue stretch at 15–116 (TVVLSSGLGG…SLVVINGWTV (102 aa)) folds into the AB hydrolase-1 domain.

Belongs to the AB hydrolase superfamily. Hydrolase RutD family.

It carries out the reaction carbamate + 2 H(+) = NH4(+) + CO2. Functionally, involved in pyrimidine catabolism. May facilitate the hydrolysis of carbamate, a reaction that can also occur spontaneously. The protein is Putative carbamate hydrolase RutD of Pantoea ananatis (strain LMG 20103).